A 30-amino-acid chain; its full sequence is Cyclotide cter-P (30 aa).

The segment at residues Gly1–Asn30 is a cross-link (cyclopeptide (Gly-Asn)). 3 cysteine pairs are disulfide-bonded: Cys4–Cys20, Cys8–Cys22, and Cys13–Cys27.

Post-translationally, this is a cyclic peptide.

Its subcellular location is the secreted. Probably participates in a plant defense mechanism. The polypeptide is Cyclotide cter-P (Clitoria ternatea (Butterfly pea)).